The chain runs to 108 residues: Long neurotoxin 13 (108 aa).

The signal sequence occupies residues 1–21; sequence MKTLLLTLVVVTIVCLDLAYT. 5 cysteine pairs are disulfide-bonded: Cys24–Cys42, Cys35–Cys63, Cys48–Cys52, Cys67–Cys78, and Cys79–Cys84.

Belongs to the three-finger toxin family. Long-chain subfamily. Type II alpha-neurotoxin sub-subfamily. Expressed by the venom gland.

The protein localises to the secreted. Binds with high affinity to muscular (alpha-1/CHRNA1) and neuronal (alpha-7/CHRNA7) nicotinic acetylcholine receptor (nAChR) and inhibits acetylcholine from binding to the receptor, thereby impairing neuromuscular and neuronal transmission. In Drysdalia coronoides (White-lipped snake), this protein is Long neurotoxin 13.